The chain runs to 162 residues: NADH-quinone oxidoreductase subunit I (162 aa).

4Fe-4S ferredoxin-type domains are found at residues leucine 53–glutamate 83 and threonine 93–isoleucine 122. The [4Fe-4S] cluster site is built by cysteine 63, cysteine 66, cysteine 69, cysteine 73, cysteine 102, cysteine 105, cysteine 108, and cysteine 112.

This sequence belongs to the complex I 23 kDa subunit family. In terms of assembly, NDH-1 is composed of 14 different subunits. Subunits NuoA, H, J, K, L, M, N constitute the membrane sector of the complex. [4Fe-4S] cluster serves as cofactor.

Its subcellular location is the cell inner membrane. The enzyme catalyses a quinone + NADH + 5 H(+)(in) = a quinol + NAD(+) + 4 H(+)(out). In terms of biological role, NDH-1 shuttles electrons from NADH, via FMN and iron-sulfur (Fe-S) centers, to quinones in the respiratory chain. The immediate electron acceptor for the enzyme in this species is believed to be ubiquinone. Couples the redox reaction to proton translocation (for every two electrons transferred, four hydrogen ions are translocated across the cytoplasmic membrane), and thus conserves the redox energy in a proton gradient. The sequence is that of NADH-quinone oxidoreductase subunit I from Bordetella bronchiseptica (strain ATCC BAA-588 / NCTC 13252 / RB50) (Alcaligenes bronchisepticus).